Here is a 573-residue protein sequence, read N- to C-terminus: Protein translocase subunit SecD (573 aa).

The chain crosses the membrane as a helical span at residues 13–33 (YLSVFLVMLIGIYLLVFFTGD). The disordered stretch occupies residues 127–200 (AQPAAEEPQP…PPAEAPATDP (74 aa)). Pro residues-rich tracts occupy residues 135–154 (QPAP…PPPA) and 161–194 (SPQP…PPAE). Transmembrane regions (helical) follow at residues 385–405 (AGMI…LLYY), 410–430 (LLTA…LVLL), 441–461 (AGIA…VVFF), 489–509 (IVSG…LAIG), and 514–534 (FAFT…LVTW).

Belongs to the SecD/SecF family. SecD subfamily. In terms of assembly, forms a complex with SecF. Part of the essential Sec protein translocation apparatus which comprises SecA, SecYEG and auxiliary proteins SecDF. Other proteins may also be involved.

The protein localises to the cell membrane. Functionally, part of the Sec protein translocase complex. Interacts with the SecYEG preprotein conducting channel. SecDF uses the proton motive force (PMF) to complete protein translocation after the ATP-dependent function of SecA. The sequence is that of Protein translocase subunit SecD from Mycobacterium tuberculosis (strain CDC 1551 / Oshkosh).